We begin with the raw amino-acid sequence, 81 residues long: MNVDHEVNLLVGEIRRLGSKGNDGKFSVKFGVLFSDDKCANLFEALVGTLKAAKKRKIITYQGELLLQGVHDNVDIVLLQD.

The protein belongs to the costars family.

This is Costars family protein ABRACL (abracl) from Xenopus laevis (African clawed frog).